Consider the following 401-residue polypeptide: Argininosuccinate synthase (401 aa).

ATP is bound at residue 9-17 (AYSGGLDTS). Residue tyrosine 86 coordinates L-citrulline. Glycine 116 is a binding site for ATP. Residues threonine 118, asparagine 122, and aspartate 123 each contribute to the L-aspartate site. L-citrulline is bound at residue asparagine 122. Positions 126, 174, 183, 259, and 271 each coordinate L-citrulline.

The protein belongs to the argininosuccinate synthase family. Type 1 subfamily. As to quaternary structure, homotetramer.

It is found in the cytoplasm. The catalysed reaction is L-citrulline + L-aspartate + ATP = 2-(N(omega)-L-arginino)succinate + AMP + diphosphate + H(+). Its pathway is amino-acid biosynthesis; L-arginine biosynthesis; L-arginine from L-ornithine and carbamoyl phosphate: step 2/3. This is Argininosuccinate synthase from Bacillus cereus (strain B4264).